A 250-amino-acid polypeptide reads, in one-letter code: L-ascorbate peroxidase, cytosolic (250 aa).

The active-site Proton acceptor is the H42. Residues 113–137 (VPFHPGREDKPEPPPEGRLPDATKG) are disordered. Positions 117 to 137 (PGREDKPEPPPEGRLPDATKG) are enriched in basic and acidic residues. Position 163 (H163) interacts with heme b. K(+) is bound by residues T164, T180, N182, I185, and D187.

It belongs to the peroxidase family. Ascorbate peroxidase subfamily. Requires heme b as cofactor.

The protein localises to the cytoplasm. It catalyses the reaction L-ascorbate + H2O2 = L-dehydroascorbate + 2 H2O. Its function is as follows. Plays a key role in hydrogen peroxide removal. This chain is L-ascorbate peroxidase, cytosolic (APX1), found in Pisum sativum (Garden pea).